Here is a 321-residue protein sequence, read N- to C-terminus: Glutathione synthetase (321 aa).

The ATP-grasp domain occupies 125 to 311 (EKLFTGWFPH…IAGQFIAFLE (187 aa)). Residue 151–208 (FIREQKEVVIKPLGAMAGESIFYLTVNDPNIPVVIETMTANGHQLVMAQRFIPEVKSG) participates in ATP binding. Mg(2+) contacts are provided by glutamate 282 and asparagine 284.

The protein belongs to the prokaryotic GSH synthase family. Mg(2+) is required as a cofactor. It depends on Mn(2+) as a cofactor.

It carries out the reaction gamma-L-glutamyl-L-cysteine + glycine + ATP = glutathione + ADP + phosphate + H(+). It participates in sulfur metabolism; glutathione biosynthesis; glutathione from L-cysteine and L-glutamate: step 2/2. In Coxiella burnetii (strain RSA 493 / Nine Mile phase I), this protein is Glutathione synthetase.